The primary structure comprises 453 residues: UPF0210 protein Pcar_2119 (453 aa).

It belongs to the UPF0210 family. Homodimer.

The chain is UPF0210 protein Pcar_2119 from Syntrophotalea carbinolica (strain DSM 2380 / NBRC 103641 / GraBd1) (Pelobacter carbinolicus).